The sequence spans 547 residues: Chaperonin GroEL (547 aa).

ATP is bound by residues 30–33, Lys-51, 87–91, Gly-415, 479–481, and Asp-495; these read TLGP, DGTTT, and NAA.

The protein belongs to the chaperonin (HSP60) family. Forms a cylinder of 14 subunits composed of two heptameric rings stacked back-to-back. Interacts with the co-chaperonin GroES.

The protein resides in the cytoplasm. It catalyses the reaction ATP + H2O + a folded polypeptide = ADP + phosphate + an unfolded polypeptide.. In terms of biological role, together with its co-chaperonin GroES, plays an essential role in assisting protein folding. The GroEL-GroES system forms a nano-cage that allows encapsulation of the non-native substrate proteins and provides a physical environment optimized to promote and accelerate protein folding. The sequence is that of Chaperonin GroEL from Pseudomonas savastanoi pv. phaseolicola (strain 1448A / Race 6) (Pseudomonas syringae pv. phaseolicola (strain 1448A / Race 6)).